The sequence spans 266 residues: MIINFVGNTLIIFNEDIPCDLLRKKYKELFVPTISVLDFKKKRLYRKYNNIFLYTYKNYSFLWELENNILHKVQKCLNKNGILKLIIYLNKNDVITPDKHENKNNNDIKVNIDQKDYCENYINDIFKNIKKECLYNGFINIVNETSVAENGIILNITAENPDFLSNEDNDVSSDDEDLYNNEDDKKKVVNRVCDNCTCGKKEKLLNSENKVLINEKDGEYITENVVSSCGNCYLGDAFRCASCPYKGLPAFQPGENVKLNLNNESN.

The tract at residues 1 to 164 (MIINFVGNTL…NITAENPDFL (164 aa)) is N-terminal SAM-like domain. The interval 165 to 185 (SNEDNDVSSDDEDLYNNEDDK) is linker. 4 residues coordinate [4Fe-4S] cluster: cysteine 229, cysteine 232, cysteine 240, and cysteine 243. Short sequence motifs (cx2C motif) lie at residues 229–232 (CGNC) and 240–243 (CASC). The interval 229–243 (CGNCYLGDAFRCASC) is fe-S binding site B.

The protein belongs to the anamorsin family. In terms of assembly, monomer. The cofactor is [4Fe-4S] cluster.

The protein localises to the cytoplasm. The protein resides in the mitochondrion intermembrane space. Functionally, component of the cytosolic iron-sulfur (Fe-S) protein assembly (CIA) machinery. Required for the maturation of extramitochondrial Fe-S proteins. Part of an electron transfer chain functioning in an early step of cytosolic Fe-S biogenesis, facilitating the de novo assembly of a [4Fe-4S] cluster on the cytosolic Fe-S scaffold complex. Electrons are transferred from NADPH via a FAD- and FMN-containing diflavin oxidoreductase. Together with the diflavin oxidoreductase, also required for the assembly of the diferric tyrosyl radical cofactor of ribonucleotide reductase (RNR), probably by providing electrons for reduction during radical cofactor maturation in the catalytic small subunit. The chain is Anamorsin homolog from Plasmodium falciparum (isolate 3D7).